An 89-amino-acid polypeptide reads, in one-letter code: Translation initiation factor IF-1 1 (89 aa).

Residues 1-73 (MSNKEQLIEM…TKGRITFRHL (73 aa)) form the S1-like domain.

Belongs to the IF-1 family. Component of the 30S ribosomal translation pre-initiation complex which assembles on the 30S ribosome in the order IF-2 and IF-3, IF-1 and N-formylmethionyl-tRNA(fMet); mRNA recruitment can occur at any time during PIC assembly.

Its subcellular location is the cytoplasm. In terms of biological role, one of the essential components for the initiation of protein synthesis. Stabilizes the binding of IF-2 and IF-3 on the 30S subunit to which N-formylmethionyl-tRNA(fMet) subsequently binds. Helps modulate mRNA selection, yielding the 30S pre-initiation complex (PIC). Upon addition of the 50S ribosomal subunit IF-1, IF-2 and IF-3 are released leaving the mature 70S translation initiation complex. The protein is Translation initiation factor IF-1 1 of Acidovorax sp. (strain JS42).